Consider the following 317-residue polypeptide: Ubiquinone biosynthesis protein COQ9-A, mitochondrial (317 aa).

Residues 1–46 constitute a mitochondrion transit peptide; sequence MAASVTRVLKGAGGRQLLLMVARRRPVLMQPFLLMPRKFWVSSALR. Residues 50 to 97 are disordered; that stretch reads QRQPPFSASSTHAETQGHAEEQYQQKQPPPRYTDQAGEESEGYESEEQ. The segment covering 53–63 has biased composition (polar residues); the sequence is PPFSASSTHAE. Positions 85–96 are enriched in acidic residues; the sequence is AGEESEGYESEE. Arg-243 is a binding site for a 1,2-diacylglycero-3-phosphoethanolamine.

This sequence belongs to the COQ9 family. As to quaternary structure, homodimer. Heterodimer; two heterodimers of COQ7:COQ9 come together on the same side of the lipid pseudo-bilayer and form a curved tetramer with a hydrophobic surface suitable for membrane interaction. These two tetramers assemble into a soluble octamer with a pseudo-bilayer of lipids captured within. Interacts with COQ7; this interaction allows ubiquinone (CoQ) isoprene intermediates presentation to COQ7 and facilitates the COQ7-mediated hydroxylase step.

The protein resides in the mitochondrion. The protein operates within cofactor biosynthesis; ubiquinone biosynthesis. Its function is as follows. Membrane-associated protein that warps the membrane surface to access and bind aromatic isoprenes with high specificity, including ubiquinone (CoQ) isoprene intermediates and presents them directly to COQ7, therefore facilitating the COQ7-mediated hydroxylase step. Participates in the biosynthesis of coenzyme Q, also named ubiquinone, an essential lipid-soluble electron transporter for aerobic cellular respiration. This chain is Ubiquinone biosynthesis protein COQ9-A, mitochondrial (coq9-a), found in Xenopus laevis (African clawed frog).